The primary structure comprises 412 residues: Isovaleryl-CoA dehydrogenase, mitochondrial (412 aa).

Residues 1-25 (MHKLFVARSVKSALFRIKNHQKPQF) constitute a mitochondrion transit peptide. Residues 154–163 (LAMSEPNAGS) and 187–189 (WCT) contribute to the FAD site. Ser163 contacts substrate. Substrate is bound by residues 209-210 (SK), Tyr264, and 271-274 (DLER). Glu273 acts as the Proton acceptor in catalysis. FAD-binding positions include Arg299, Gln310, and 367-371 (QCLGG). 394-395 (AG) lines the substrate pocket. 396–398 (TSE) is a binding site for FAD.

This sequence belongs to the acyl-CoA dehydrogenase family. As to quaternary structure, homotetramer. Requires FAD as cofactor. As to expression, expressed in flowers and tubers.

The protein resides in the mitochondrion. It catalyses the reaction 3-methylbutanoyl-CoA + oxidized [electron-transfer flavoprotein] + H(+) = 3-methylbut-2-enoyl-CoA + reduced [electron-transfer flavoprotein]. It participates in amino-acid degradation; L-leucine degradation; (S)-3-hydroxy-3-methylglutaryl-CoA from 3-isovaleryl-CoA: step 1/3. In terms of biological role, involved in the catabolism of amino acids. Uses isovaleryl-CoA as substrate. Minor activity detected with 2-methylpalmitoyl-CoA or 2-methylbutanoyl-CoA, but no activity with short- and medium-straight chain acyl-CoA esters or with 2-methylhexanoyl-CoA. The protein is Isovaleryl-CoA dehydrogenase, mitochondrial (IVD) of Solanum tuberosum (Potato).